An 861-amino-acid polypeptide reads, in one-letter code: Seed linoleate 9S-lipoxygenase-3 (861 aa).

A PLAT domain is found at glutamine 41–alanine 166. The Lipoxygenase domain maps to threonine 169–isoleucine 861. The segment at asparagine 215–aspartate 257 is disordered. Positions arginine 237 to threonine 246 are enriched in basic residues. A compositionally biased stretch (basic and acidic residues) spans arginine 247–aspartate 257. Residues histidine 522, histidine 527, histidine 713, asparagine 717, and isoleucine 861 each contribute to the Fe cation site.

The protein belongs to the lipoxygenase family. Fe cation is required as a cofactor.

Its subcellular location is the cytoplasm. The catalysed reaction is (9Z,12Z)-octadecadienoate + O2 = (9S)-hydroperoxy-(10E,12Z)-octadecadienoate. Its pathway is lipid metabolism; oxylipin biosynthesis. Functionally, plant lipoxygenase may be involved in a number of diverse aspects of plant physiology including growth and development, pest resistance, and senescence or responses to wounding. It catalyzes the hydroperoxidation of lipids containing a cis,cis-1,4-pentadiene structure. The sequence is that of Seed linoleate 9S-lipoxygenase-3 (LOX1.3) from Pisum sativum (Garden pea).